The following is an 87-amino-acid chain: Putative defensin-like protein 304 (87 aa).

The first 19 residues, Met-1–Cys-19, serve as a signal peptide directing secretion. 3 disulfide bridges follow: Cys-27–Cys-46, Cys-33–Cys-51, and Cys-40–Cys-53.

Belongs to the DEFL family.

It localises to the secreted. The polypeptide is Putative defensin-like protein 304 (Arabidopsis thaliana (Mouse-ear cress)).